The chain runs to 400 residues: Aspartate/prephenate aminotransferase (400 aa).

3 residues coordinate L-aspartate: Gly39, Trp125, and Asn175. The residue at position 239 (Lys239) is an N6-(pyridoxal phosphate)lysine. Arg375 provides a ligand contact to L-aspartate.

This sequence belongs to the class-I pyridoxal-phosphate-dependent aminotransferase family. Homodimer. Pyridoxal 5'-phosphate serves as cofactor.

The protein localises to the cytoplasm. It carries out the reaction L-aspartate + 2-oxoglutarate = oxaloacetate + L-glutamate. The enzyme catalyses L-arogenate + 2-oxoglutarate = prephenate + L-glutamate. Functionally, catalyzes the reversible conversion of aspartate and 2-oxoglutarate to glutamate and oxaloacetate. Can also transaminate prephenate in the presence of glutamate. Required for symbiotic nitrogen fixation. This chain is Aspartate/prephenate aminotransferase, found in Rhizobium meliloti (strain 1021) (Ensifer meliloti).